Consider the following 347-residue polypeptide: Very-long-chain 3-oxoacyl-CoA reductase (347 aa).

Residues 20–40 traverse the membrane as a helical segment; sequence LLWVVFGLGVLKCTTLSLRFL. NADP(+) contacts are provided by V66, D120, N147, Y223, K227, V256, and S258. Y223 (proton donor) is an active-site residue. The Lowers pKa of active site Tyr role is filled by K227.

Belongs to the short-chain dehydrogenases/reductases (SDR) family. As to quaternary structure, interacts with the fatty acid elongation system components ELO3 and TSC13.

The protein resides in the endoplasmic reticulum membrane. The catalysed reaction is a very-long-chain (3R)-3-hydroxyacyl-CoA + NADP(+) = a very-long-chain 3-oxoacyl-CoA + NADPH + H(+). It participates in lipid metabolism; fatty acid biosynthesis. Component of the microsomal membrane bound fatty acid elongation system, which produces the 26-carbon very long-chain fatty acids (VLCFA) from palmitate. Catalyzes the reduction of the 3-ketoacyl-CoA intermediate that is formed in each cycle of fatty acid elongation. VLCFAs serve as precursors for ceramide and sphingolipids. In Saccharomyces cerevisiae (strain RM11-1a) (Baker's yeast), this protein is Very-long-chain 3-oxoacyl-CoA reductase.